The chain runs to 126 residues: Fluoride-specific ion channel FluC (126 aa).

The next 4 helical transmembrane spans lie at 6–26, 36–56, 69–89, and 99–119; these read FLAV…LAIL, YGTL…VGFF, LVIT…GEVV, and IGVL…MLGF. Positions 76 and 79 each coordinate Na(+).

Belongs to the fluoride channel Fluc/FEX (TC 1.A.43) family.

It localises to the cell inner membrane. It carries out the reaction fluoride(in) = fluoride(out). Na(+) is not transported, but it plays an essential structural role and its presence is essential for fluoride channel function. Its function is as follows. Fluoride-specific ion channel. Important for reducing fluoride concentration in the cell, thus reducing its toxicity. In Ralstonia pickettii (strain 12J), this protein is Fluoride-specific ion channel FluC.